We begin with the raw amino-acid sequence, 554 residues long: CTP synthase (554 aa).

Residues methionine 1–leucine 265 form an amidoligase domain region. Serine 13 is a CTP binding site. Serine 13 is a UTP binding site. ATP is bound by residues serine 14 to isoleucine 19 and aspartate 71. 2 residues coordinate Mg(2+): aspartate 71 and glutamate 139. CTP is bound by residues aspartate 146 to glutamate 148, lysine 186 to glutamine 191, and lysine 222. UTP contacts are provided by residues lysine 186 to glutamine 191 and lysine 222. In terms of domain architecture, Glutamine amidotransferase type-1 spans threonine 292–glycine 545. An L-glutamine-binding site is contributed by glycine 353. The active-site Nucleophile; for glutamine hydrolysis is cysteine 380. Residues tyrosine 381–glutamine 384, glutamate 404, and arginine 471 each bind L-glutamine. Catalysis depends on residues histidine 518 and glutamate 520.

This sequence belongs to the CTP synthase family. In terms of assembly, homotetramer.

It catalyses the reaction UTP + L-glutamine + ATP + H2O = CTP + L-glutamate + ADP + phosphate + 2 H(+). The catalysed reaction is L-glutamine + H2O = L-glutamate + NH4(+). The enzyme catalyses UTP + NH4(+) + ATP = CTP + ADP + phosphate + 2 H(+). The protein operates within pyrimidine metabolism; CTP biosynthesis via de novo pathway; CTP from UDP: step 2/2. With respect to regulation, allosterically activated by GTP, when glutamine is the substrate; GTP has no effect on the reaction when ammonia is the substrate. The allosteric effector GTP functions by stabilizing the protein conformation that binds the tetrahedral intermediate(s) formed during glutamine hydrolysis. Inhibited by the product CTP, via allosteric rather than competitive inhibition. In terms of biological role, catalyzes the ATP-dependent amination of UTP to CTP with either L-glutamine or ammonia as the source of nitrogen. Regulates intracellular CTP levels through interactions with the four ribonucleotide triphosphates. This chain is CTP synthase, found in Xylella fastidiosa (strain M12).